We begin with the raw amino-acid sequence, 248 residues long: 3-deoxy-manno-octulosonate cytidylyltransferase (248 aa).

Belongs to the KdsB family.

The protein resides in the cytoplasm. The catalysed reaction is 3-deoxy-alpha-D-manno-oct-2-ulosonate + CTP = CMP-3-deoxy-beta-D-manno-octulosonate + diphosphate. The protein operates within nucleotide-sugar biosynthesis; CMP-3-deoxy-D-manno-octulosonate biosynthesis; CMP-3-deoxy-D-manno-octulosonate from 3-deoxy-D-manno-octulosonate and CTP: step 1/1. It participates in bacterial outer membrane biogenesis; lipopolysaccharide biosynthesis. Functionally, activates KDO (a required 8-carbon sugar) for incorporation into bacterial lipopolysaccharide in Gram-negative bacteria. The chain is 3-deoxy-manno-octulosonate cytidylyltransferase from Salmonella arizonae (strain ATCC BAA-731 / CDC346-86 / RSK2980).